The sequence spans 159 residues: MEEGLLVRKIREGTVIDHIPAGRALNVLKILGLTGREGLTIAVVMNVPSRKLGVKDIVKVEKRFLEPSEVDKIALIAPSATINIIRDFQVASKRRVEPPAVVTGILRCPNPNCVTNSEREPVTPRFVRVSLSPLKLKCAYCEETLSEAEIVDQLVSPYG.

Positions 108, 113, 138, and 141 each coordinate Zn(2+).

The protein belongs to the PyrI family. As to quaternary structure, contains catalytic and regulatory chains. Zn(2+) serves as cofactor.

In terms of biological role, involved in allosteric regulation of aspartate carbamoyltransferase. The polypeptide is Aspartate carbamoyltransferase regulatory chain (Thermofilum pendens (strain DSM 2475 / Hrk 5)).